The chain runs to 267 residues: Translation initiation factor 2 subunit alpha (267 aa).

Residues 17 to 88 (GEIVIGTVKR…KRGHIDLSIK (72 aa)) form the S1 motif domain.

It belongs to the eIF-2-alpha family. In terms of assembly, heterotrimer composed of an alpha, a beta and a gamma chain.

Functionally, eIF-2 functions in the early steps of protein synthesis by forming a ternary complex with GTP and initiator tRNA. The sequence is that of Translation initiation factor 2 subunit alpha (eif2a) from Archaeoglobus fulgidus (strain ATCC 49558 / DSM 4304 / JCM 9628 / NBRC 100126 / VC-16).